We begin with the raw amino-acid sequence, 707 residues long: ATP-dependent zinc metalloprotease FtsH (707 aa).

Residues methionine 1 to serine 25 lie on the Cytoplasmic side of the membrane. Residues isoleucine 26–phenylalanine 46 form a helical membrane-spanning segment. Topologically, residues leucine 47–alanine 128 are extracellular. A helical transmembrane segment spans residues threonine 129–valine 149. Residues threonine 150–lysine 707 are Cytoplasmic-facing. Glycine 246–threonine 253 contributes to the ATP binding site. A Zn(2+)-binding site is contributed by histidine 468. Residue glutamate 469 is part of the active site. The Zn(2+) site is built by histidine 472 and aspartate 546.

This sequence in the central section; belongs to the AAA ATPase family. In the C-terminal section; belongs to the peptidase M41 family. In terms of assembly, homohexamer. The cofactor is Zn(2+).

The protein resides in the cell membrane. Functionally, acts as a processive, ATP-dependent zinc metallopeptidase for both cytoplasmic and membrane proteins. Plays a role in the quality control of integral membrane proteins. The sequence is that of ATP-dependent zinc metalloprotease FtsH from Mycoplasma mobile (strain ATCC 43663 / 163K / NCTC 11711) (Mesomycoplasma mobile).